The primary structure comprises 252 residues: Imidazole glycerol phosphate synthase subunit HisF (252 aa).

Catalysis depends on residues D11 and D130.

This sequence belongs to the HisA/HisF family. As to quaternary structure, heterodimer of HisH and HisF.

Its subcellular location is the cytoplasm. The catalysed reaction is 5-[(5-phospho-1-deoxy-D-ribulos-1-ylimino)methylamino]-1-(5-phospho-beta-D-ribosyl)imidazole-4-carboxamide + L-glutamine = D-erythro-1-(imidazol-4-yl)glycerol 3-phosphate + 5-amino-1-(5-phospho-beta-D-ribosyl)imidazole-4-carboxamide + L-glutamate + H(+). It participates in amino-acid biosynthesis; L-histidine biosynthesis; L-histidine from 5-phospho-alpha-D-ribose 1-diphosphate: step 5/9. In terms of biological role, IGPS catalyzes the conversion of PRFAR and glutamine to IGP, AICAR and glutamate. The HisF subunit catalyzes the cyclization activity that produces IGP and AICAR from PRFAR using the ammonia provided by the HisH subunit. This Acinetobacter baumannii (strain AB307-0294) protein is Imidazole glycerol phosphate synthase subunit HisF.